A 1399-amino-acid polypeptide reads, in one-letter code: DNA-directed RNA polymerase subunit beta' (1399 aa).

4 residues coordinate Zn(2+): Cys70, Cys72, Cys85, and Cys88. Positions 460, 462, and 464 each coordinate Mg(2+). Residues Cys814, Cys888, Cys895, and Cys898 each contribute to the Zn(2+) site.

The protein belongs to the RNA polymerase beta' chain family. In terms of assembly, the RNAP catalytic core consists of 2 alpha, 1 beta, 1 beta' and 1 omega subunit. When a sigma factor is associated with the core the holoenzyme is formed, which can initiate transcription. Requires Mg(2+) as cofactor. Zn(2+) is required as a cofactor.

It catalyses the reaction RNA(n) + a ribonucleoside 5'-triphosphate = RNA(n+1) + diphosphate. Its function is as follows. DNA-dependent RNA polymerase catalyzes the transcription of DNA into RNA using the four ribonucleoside triphosphates as substrates. The chain is DNA-directed RNA polymerase subunit beta' from Ectopseudomonas mendocina (strain ymp) (Pseudomonas mendocina).